The sequence spans 263 residues: Tetraspanin-7 (263 aa).

Topologically, residues 1–7 (MVQCSNN) are cytoplasmic. A helical transmembrane segment spans residues 8-28 (LLGILNFFTFLLSIPILSAGI). At 29-45 (WLGKNAATECERFLDKP) the chain is on the extracellular side. A helical membrane pass occupies residues 46 to 66 (MVVLGIFLMFVSIAGLVGACC). Topologically, residues 67-75 (RVSCLLWLY) are cytoplasmic. A helical membrane pass occupies residues 76–96 (LFAMFLLILLGFCFTIFAFAV). Over 97–234 (TNRGAGEVIS…NIKNSWKKVA (138 aa)) the chain is Extracellular. The N-linked (GlcNAc...) asparagine glycan is linked to asparagine 180. A helical membrane pass occupies residues 235–255 (KVNIVFLIFLIIVYSVGCCAF). At 256-263 (RNNRKRSW) the chain is on the cytoplasmic side.

This sequence belongs to the tetraspanin (TM4SF) family.

Its subcellular location is the membrane. Functionally, may be involved in the regulation of cell differentiation. The chain is Tetraspanin-7 (TET7) from Arabidopsis thaliana (Mouse-ear cress).